The chain runs to 602 residues: Na(+)/dicarboxylate cotransporter 3 (602 aa).

The Cytoplasmic portion of the chain corresponds to 1–16 (MAALAAAAKKVWSARR). The chain crosses the membrane as a helical span at residues 17-37 (LLVLLFTPLALLPVVFALPPK). Over 38 to 55 (EGRCLFVILLMAVYWCTE) the chain is Extracellular. A helical transmembrane segment spans residues 56–76 (ALPLSVTALLPIVLFPFMGIL). The Cytoplasmic portion of the chain corresponds to 77 to 82 (PSNKVC). The helical transmembrane segment at 83–103 (PQYFLDTNFLFLSGLIMASAI) threads the bilayer. Residues 104-137 (EEWNLHRRIALKILMLVGVQPARLILGMMVTTSF) lie on the Extracellular side of the membrane. The chain crosses the membrane as a helical span at residues 138–158 (LSMWLSNTASTAMMLPIANAI). The Cytoplasmic segment spans residues 159–229 (LKSLFGQKEV…SRKEDEYRRN (71 aa)). Residues 230 to 250 (IWKGFLISIPYSASIGGTATL) form a helical membrane-spanning segment. Topologically, residues 251–278 (TGTAPNLILLGQLKSFFPQCDVVNFGSW) are extracellular. Residues 279–299 (FIFAFPLMLLFLLAGWLWISF) traverse the membrane as a helical segment. Residues 300-336 (LYGGLSFRGWRKNKSEIRTNAEDRARAVIREEYQNLG) are Cytoplasmic-facing. The chain crosses the membrane as a helical span at residues 337 to 357 (PIKFAEQAVFILFCMFAILLF). Topologically, residues 358-372 (TRDPKFIPGWASLFN) are extracellular. Residues 373 to 393 (PGFLSDAVTGVAIVTILFFFP) traverse the membrane as a helical segment. Over 394–422 (SQRPSLKWWFDFKAPNTETEPLLTWKKAQ) the chain is Cytoplasmic. Positions 423-443 (ETVPWNIILLLGGGFAMAKGC) form an intramembrane region, helical. Topologically, residues 444-461 (EESGLSVWIGGQLHPLEN) are cytoplasmic. Residues 462 to 482 (VPPALAVLLITVVIAFFTEFA) form a helical membrane-spanning segment. The Extracellular portion of the chain corresponds to 483–505 (SNTATIIIFLPVLAELAIRLRVH). A helical transmembrane segment spans residues 506 to 526 (PLYLMIPGTVGCSFAFMLPVS). At 527-546 (TPPNSIAFASGHLLVKDMVR) the chain is on the cytoplasmic side. The chain crosses the membrane as a helical span at residues 547 to 567 (TGLLMNLMGVLLLSLAMNTWA). Residues 568–602 (QTIFQLGTFPDWADMYSVNVTALPPTLANDTFRTL) are Extracellular-facing. N586 and N596 each carry an N-linked (GlcNAc...) asparagine glycan.

Belongs to the SLC13A/DASS transporter (TC 2.A.47) family. NADC subfamily. Expression is highest in kidney. Detected in placenta, brain, liver and pancreas.

Its subcellular location is the cell membrane. The enzyme catalyses succinate(out) + 3 Na(+)(out) = succinate(in) + 3 Na(+)(in). It catalyses the reaction 2-oxoglutarate(out) + 3 Na(+)(out) = 2-oxoglutarate(in) + 3 Na(+)(in). The catalysed reaction is N-acetyl-L-aspartate(out) + 3 Na(+)(out) = N-acetyl-L-aspartate(in) + 3 Na(+)(in). It carries out the reaction glutarate(out) + 3 Na(+)(out) = glutarate(in) + 3 Na(+)(in). The enzyme catalyses fumarate(out) + 3 Na(+)(out) = fumarate(in) + 3 Na(+)(in). It catalyses the reaction malate(out) + 3 Na(+)(out) = malate(in) + 3 Na(+)(in). The catalysed reaction is 2,2-dimethylsuccinate(out) + 3 Na(+)(out) = 2,2-dimethylsuccinate(in) + 3 Na(+)(in). It carries out the reaction 2,3-dimethylsuccinate(out) + 3 Na(+)(out) = 2,3-dimethylsuccinate(in) + 3 Na(+)(in). The enzyme catalyses itaconate(out) + 3 Na(+)(out) = itaconate(in) + 3 Na(+)(in). With respect to regulation, li(+) decreases succinate transport in the presence of Na(+). Functionally, high-affinity sodium-dicarboxylate cotransporter that accepts a range of substrates with 4-6 carbon atoms, such as the citric acid cycle intermediates succinate and alpha-ketoglutarate (2-oxoglutarate), as well as other compounds including N-acetyl-L-aspartate. Transports the dicarboxylate into the cell with a probable stoichiometry of 3 Na(+) for 1 divalent dicarboxylate, rendering the process electrogenic. Can transport citrate in a Na(+)-dependent manner, recognizing the divalent form of citrate rather than the trivalent form which is normally found in blood. Imports itaconate in hepatocytes leading to activation of TFEB-dependent lysosomal biogenesis involved in antibacterial innate immune response. The sequence is that of Na(+)/dicarboxylate cotransporter 3 (SLC13A3) from Homo sapiens (Human).